Consider the following 340-residue polypeptide: S-adenosylmethionine:tRNA ribosyltransferase-isomerase (340 aa).

The protein belongs to the QueA family. As to quaternary structure, monomer.

Its subcellular location is the cytoplasm. It carries out the reaction 7-aminomethyl-7-carbaguanosine(34) in tRNA + S-adenosyl-L-methionine = epoxyqueuosine(34) in tRNA + adenine + L-methionine + 2 H(+). The protein operates within tRNA modification; tRNA-queuosine biosynthesis. In terms of biological role, transfers and isomerizes the ribose moiety from AdoMet to the 7-aminomethyl group of 7-deazaguanine (preQ1-tRNA) to give epoxyqueuosine (oQ-tRNA). This Vesicomyosocius okutanii subsp. Calyptogena okutanii (strain HA) protein is S-adenosylmethionine:tRNA ribosyltransferase-isomerase.